We begin with the raw amino-acid sequence, 217 residues long: MRIILLGAPGAGKGTQAKFIMEAFEIPQISTGDMLRAAVKAGSPLGVKVKDIMASGQLVSDDIIIDLVKERISKPDCANGFLFDGFPRTIPQAEALTESGVEIEHVMEIHVDDEEIVARLSGRRVHEASGRIYHVTHNPPKTEGVDDITGEPLVQRDDDQEDTVRNRLSIYHDQTEPLVEYYQKQEAENPGTVKFTRIAGVGPLAEIKDKVLSALGK.

10-15 (GAGKGT) provides a ligand contact to ATP. The interval 30 to 59 (STGDMLRAAVKAGSPLGVKVKDIMASGQLV) is NMP. AMP is bound by residues Thr-31, Arg-36, 57–59 (QLV), 85–88 (GFPR), and Gln-92. The LID stretch occupies residues 122–159 (GRRVHEASGRIYHVTHNPPKTEGVDDITGEPLVQRDDD). Residues Arg-123 and 132 to 133 (IY) each bind ATP. AMP is bound by residues Arg-156 and Arg-167. Gly-202 is a binding site for ATP.

The protein belongs to the adenylate kinase family. Monomer.

It is found in the cytoplasm. The enzyme catalyses AMP + ATP = 2 ADP. The protein operates within purine metabolism; AMP biosynthesis via salvage pathway; AMP from ADP: step 1/1. Functionally, catalyzes the reversible transfer of the terminal phosphate group between ATP and AMP. Plays an important role in cellular energy homeostasis and in adenine nucleotide metabolism. The sequence is that of Adenylate kinase from Teredinibacter turnerae (strain ATCC 39867 / T7901).